Here is an 811-residue protein sequence, read N- to C-terminus: Potassium transporter 7 (811 aa).

The Cytoplasmic segment spans residues 1–52 (MPSYQYLLSLLFYILDCTDRFSVIVTIHNHRVGVLMIVLLQDQWKSYCRTIS). Residues 53–73 (LLAFQSFGVVYGDLSTSPLYV) traverse the membrane as a helical segment. At 74-93 (YKSAFSGRLNNYRDETTIFG) the chain is on the extracellular side. The chain crosses the membrane as a helical span at residues 94–114 (LFSLIFWTLTLLPLLKYVIIV). The Cytoplasmic portion of the chain corresponds to 115–181 (LNADDNGEGG…EKHRKLRTCL (67 aa)). Residues 182–202 (LLFVLFGACMVIGDGVFTPAI) traverse the membrane as a helical segment. Topologically, residues 203-217 (SVLSAISGLKDPGPG) are extracellular. Residues 218–238 (GIPDGWVVFIACIVLVGLFAL) traverse the membrane as a helical segment. Over 239 to 245 (QHRGTHR) the chain is Cytoplasmic. The chain crosses the membrane as a helical span at residues 246-266 (VAFMFAPIVVVWLLSIGVIGL). Residues 267-296 (YNIIHWNHRIFLALSPHYVIKFFKMTGKDG) lie on the Extracellular side of the membrane. Residues 297–317 (WLSLGGVLLAITGTEAMFADL) form a helical membrane-spanning segment. Residues 318–326 (GHFTAASIR) lie on the Cytoplasmic side of the membrane. A helical membrane pass occupies residues 327–347 (LAFVGAIYPCLVLQYMGQAAF). Residues 348 to 366 (LSRNMSAVEDSFYQSVPRS) lie on the Extracellular side of the membrane. A glycan (N-linked (GlcNAc...) asparagine) is linked at asparagine 351. Residues 367 to 387 (LFWPVFVIATLAAVVGSQSII) traverse the membrane as a helical segment. The Cytoplasmic portion of the chain corresponds to 388–418 (SATFSIVKQCLSLGCFPRVKVVHTSRWIHGQ). The helical transmembrane segment at 419–439 (IYIPEINWILMVLCLAVTLGF) threads the bilayer. Residues 440 to 450 (RDTTVIGNAYG) are Extracellular-facing. The chain crosses the membrane as a helical span at residues 451–471 (LACIVVMFVTTWLMALVIIFV). Residues 472 to 475 (WQKN) lie on the Cytoplasmic side of the membrane. A helical membrane pass occupies residues 476–496 (ILLALLFVVAFGSIEVVYLSA). Residues 497–503 (AVTKVPQ) are Extracellular-facing. A helical transmembrane segment spans residues 504 to 524 (GGWAPIVFAFVFMLVMYVWHY). The Cytoplasmic segment spans residues 525–811 (GSRRKYLFDL…LVEVGMIYYV (287 aa)). The disordered stretch occupies residues 680–702 (TGLVMRDSNNEASGTSLTRSSRS).

It belongs to the HAK/KUP transporter (TC 2.A.72.3) family. In terms of tissue distribution, expressed in roots and shoots.

It is found in the membrane. High-affinity potassium transporter. The polypeptide is Potassium transporter 7 (HAK7) (Oryza sativa subsp. japonica (Rice)).